The chain runs to 341 residues: Methionine import ATP-binding protein MetN 2 (341 aa).

Residues 2–241 (IKLNQIVKRY…PQHEVTKRFV (240 aa)) form the ABC transporter domain. Residue 38–45 (GFSGAGKS) participates in ATP binding.

The protein belongs to the ABC transporter superfamily. Methionine importer (TC 3.A.1.24) family. The complex is composed of two ATP-binding proteins (MetN), two transmembrane proteins (MetI) and a solute-binding protein (MetQ).

The protein resides in the cell membrane. It catalyses the reaction L-methionine(out) + ATP + H2O = L-methionine(in) + ADP + phosphate + H(+). The catalysed reaction is D-methionine(out) + ATP + H2O = D-methionine(in) + ADP + phosphate + H(+). Part of the ABC transporter complex MetNIQ involved in methionine import. Responsible for energy coupling to the transport system. The protein is Methionine import ATP-binding protein MetN 2 of Staphylococcus epidermidis (strain ATCC 35984 / DSM 28319 / BCRC 17069 / CCUG 31568 / BM 3577 / RP62A).